The chain runs to 571 residues: 2-succinyl-5-enolpyruvyl-6-hydroxy-3-cyclohexene-1-carboxylate synthase (571 aa).

This sequence belongs to the TPP enzyme family. MenD subfamily. Homodimer. It depends on Mg(2+) as a cofactor. The cofactor is Mn(2+). Requires thiamine diphosphate as cofactor.

It catalyses the reaction isochorismate + 2-oxoglutarate + H(+) = 5-enolpyruvoyl-6-hydroxy-2-succinyl-cyclohex-3-ene-1-carboxylate + CO2. It participates in quinol/quinone metabolism; 1,4-dihydroxy-2-naphthoate biosynthesis; 1,4-dihydroxy-2-naphthoate from chorismate: step 2/7. Its pathway is quinol/quinone metabolism; menaquinone biosynthesis. In terms of biological role, catalyzes the thiamine diphosphate-dependent decarboxylation of 2-oxoglutarate and the subsequent addition of the resulting succinic semialdehyde-thiamine pyrophosphate anion to isochorismate to yield 2-succinyl-5-enolpyruvyl-6-hydroxy-3-cyclohexene-1-carboxylate (SEPHCHC). The protein is 2-succinyl-5-enolpyruvyl-6-hydroxy-3-cyclohexene-1-carboxylate synthase of Lysinibacillus sphaericus (strain C3-41).